The following is a 129-amino-acid chain: Membrane protein 0 (129 aa).

A disordered region spans residues 1–25 (MATVHYSRRPGTPPVTLTSSPSMDD). Positions 44 to 47 (PPPY) match the PPXY motif motif. Residues 100 to 120 (FLILFGILTLTAVVVAIVAVF) traverse the membrane as a helical segment.

The protein belongs to the varicellovirus ORF0 protein family. As to quaternary structure, interacts with host ITCH; this interaction probably mediates ITCH degradation.

The protein resides in the host Golgi apparatus membrane. This chain is Membrane protein 0, found in Homo sapiens (Human).